We begin with the raw amino-acid sequence, 198 residues long: Pyridoxal 5'-phosphate synthase subunit PdxT (198 aa).

50 to 52 (GES) is a binding site for L-glutamine. Catalysis depends on cysteine 82, which acts as the Nucleophile. Residues arginine 114 and 143-144 (IR) each bind L-glutamine. Catalysis depends on charge relay system residues histidine 179 and glutamate 181.

Belongs to the glutaminase PdxT/SNO family. As to quaternary structure, in the presence of PdxS, forms a dodecamer of heterodimers. Only shows activity in the heterodimer.

It catalyses the reaction aldehydo-D-ribose 5-phosphate + D-glyceraldehyde 3-phosphate + L-glutamine = pyridoxal 5'-phosphate + L-glutamate + phosphate + 3 H2O + H(+). It carries out the reaction L-glutamine + H2O = L-glutamate + NH4(+). Its pathway is cofactor biosynthesis; pyridoxal 5'-phosphate biosynthesis. Catalyzes the hydrolysis of glutamine to glutamate and ammonia as part of the biosynthesis of pyridoxal 5'-phosphate. The resulting ammonia molecule is channeled to the active site of PdxS. The polypeptide is Pyridoxal 5'-phosphate synthase subunit PdxT (Metallosphaera sedula (strain ATCC 51363 / DSM 5348 / JCM 9185 / NBRC 15509 / TH2)).